A 549-amino-acid chain; its full sequence is Probable protein kinase UbiB (549 aa).

The Protein kinase domain occupies 123 to 501 (NFDDTPLASA…QQKAHKSNYL (379 aa)). ATP contacts are provided by residues 129-137 (LASASISQV) and lysine 152. The active-site Proton acceptor is aspartate 287. Transmembrane regions (helical) follow at residues 498–518 (SNYL…LFSQ) and 520–540 (ATLW…LLGW).

This sequence belongs to the ABC1 family. UbiB subfamily.

Its subcellular location is the cell inner membrane. It functions in the pathway cofactor biosynthesis; ubiquinone biosynthesis [regulation]. In terms of biological role, is probably a protein kinase regulator of UbiI activity which is involved in aerobic coenzyme Q (ubiquinone) biosynthesis. This chain is Probable protein kinase UbiB, found in Shewanella loihica (strain ATCC BAA-1088 / PV-4).